A 343-amino-acid polypeptide reads, in one-letter code: Mating-type protein MAT-2 (343 aa).

Disordered stretches follow at residues 98 to 117 (RSPQVVSSPQSAQTSPSEQT) and 177 to 223 (KKPW…AAMT). A compositionally biased stretch (low complexity) spans 99–117 (SPQVVSSPQSAQTSPSEQT). The HMG box DNA-binding region spans 131 to 199 (APRPMNCWII…EHLRQHPNYK (69 aa)). Basic residues predominate over residues 206-218 (GEKKKRQSRKSKR).

It is found in the nucleus. In Cochliobolus heterostrophus (Southern corn leaf blight fungus), this protein is Mating-type protein MAT-2 (MAT2).